A 96-amino-acid chain; its full sequence is UPF0235 protein VCM66_0443 (96 aa).

This sequence belongs to the UPF0235 family.

The sequence is that of UPF0235 protein VCM66_0443 from Vibrio cholerae serotype O1 (strain M66-2).